Consider the following 679-residue polypeptide: Penicillin-binding protein 1A (679 aa).

A compositionally biased stretch (basic residues) spans 1-14 (MTERKREHKDRKQN). The tract at residues 1 to 20 (MTERKREHKDRKQNKNSPKN) is disordered. Over 1–30 (MTERKREHKDRKQNKNSPKNQSKVTKFLKW) the chain is Cytoplasmic. The helical; Signal-anchor for type II membrane protein transmembrane segment at 31–51 (FFIGILLLGITAVTVVGIYVL) threads the bilayer. Over 52–679 (SIIRSSPELD…QYKEVDNLVE (628 aa)) the chain is Extracellular. The segment at 72-244 (SILYDDQGNF…PTSYDGLSEA (173 aa)) is transglycosylase. Residue Glu111 is the Proton donor; for transglycosylase activity of the active site. Residues 378 to 663 (ASATIIDYKT…TSPIFGKIMG (286 aa)) form a transpeptidase region. Ser417 serves as the catalytic Acyl-ester intermediate; for transpeptidase activity.

In the N-terminal section; belongs to the glycosyltransferase 51 family. The protein in the C-terminal section; belongs to the transpeptidase family.

The protein resides in the cell membrane. It carries out the reaction [GlcNAc-(1-&gt;4)-Mur2Ac(oyl-L-Ala-gamma-D-Glu-L-Lys-D-Ala-D-Ala)](n)-di-trans,octa-cis-undecaprenyl diphosphate + beta-D-GlcNAc-(1-&gt;4)-Mur2Ac(oyl-L-Ala-gamma-D-Glu-L-Lys-D-Ala-D-Ala)-di-trans,octa-cis-undecaprenyl diphosphate = [GlcNAc-(1-&gt;4)-Mur2Ac(oyl-L-Ala-gamma-D-Glu-L-Lys-D-Ala-D-Ala)](n+1)-di-trans,octa-cis-undecaprenyl diphosphate + di-trans,octa-cis-undecaprenyl diphosphate + H(+). It catalyses the reaction Preferential cleavage: (Ac)2-L-Lys-D-Ala-|-D-Ala. Also transpeptidation of peptidyl-alanyl moieties that are N-acyl substituents of D-alanine.. It participates in cell wall biogenesis; peptidoglycan biosynthesis. In terms of biological role, cell wall formation. Synthesis of cross-linked peptidoglycan from the lipid intermediates. The enzyme has a penicillin-insensitive transglycosylase N-terminal domain (formation of linear glycan strands) and a penicillin-sensitive transpeptidase C-terminal domain (cross-linking of the peptide subunits). In Clostridium perfringens (strain 13 / Type A), this protein is Penicillin-binding protein 1A (pbpA).